Here is a 357-residue protein sequence, read N- to C-terminus: Alpha-2-macroglobulin receptor-associated protein (357 aa).

An N-terminal signal peptide occupies residues Met-1–Lys-34. Positions Gly-32–Glu-52 are disordered. Positions Tyr-35–Glu-52 are enriched in basic and acidic residues. Residues Ser-50 and Ser-135 each carry the phosphoserine modification. Residues Ser-219 to Ser-310 are a coiled coil. Residues Arg-237–Arg-353 form an LDL receptor binding region. Thr-248 is subject to Phosphothreonine. Asn-268 carries an N-linked (GlcNAc...) asparagine glycan. Positions His-354–Leu-357 match the Prevents secretion from ER motif.

The protein belongs to the alpha-2-MRAP family. As to quaternary structure, interacts with the LRP1/alpha-2-macroglobulin receptor heavy and light chains; the interaction is transient and coincides with a reduction of ligand binding by the receptor. Interacts with LRP2/glycoprotein 330. Interacts with LRP1B; binding is followed by internalization and degradation. Interacts with LDLR. Interacts with SORL1. Interacts with LRP1; this interaction is followed by rapid internalization. N-glycosylated.

It localises to the rough endoplasmic reticulum lumen. Its subcellular location is the endoplasmic reticulum-Golgi intermediate compartment lumen. The protein localises to the golgi apparatus. It is found in the cis-Golgi network. The protein resides in the golgi apparatus lumen. It localises to the endosome lumen. Its subcellular location is the cell surface. In terms of biological role, molecular chaperone for LDL receptor-related proteins that may regulate their ligand binding activity along the secretory pathway. This chain is Alpha-2-macroglobulin receptor-associated protein, found in Homo sapiens (Human).